The sequence spans 307 residues: Methionyl-tRNA formyltransferase (307 aa).

(6S)-5,6,7,8-tetrahydrofolate is bound at residue 108 to 111; that stretch reads SLLP.

The protein belongs to the Fmt family.

It catalyses the reaction L-methionyl-tRNA(fMet) + (6R)-10-formyltetrahydrofolate = N-formyl-L-methionyl-tRNA(fMet) + (6S)-5,6,7,8-tetrahydrofolate + H(+). Attaches a formyl group to the free amino group of methionyl-tRNA(fMet). The formyl group appears to play a dual role in the initiator identity of N-formylmethionyl-tRNA by promoting its recognition by IF2 and preventing the misappropriation of this tRNA by the elongation apparatus. The chain is Methionyl-tRNA formyltransferase from Xanthomonas campestris pv. campestris (strain 8004).